The chain runs to 259 residues: Tryptophan synthase alpha chain (259 aa).

Residues glutamate 52 and aspartate 63 each act as proton acceptor in the active site.

It belongs to the TrpA family. Tetramer of two alpha and two beta chains.

The enzyme catalyses (1S,2R)-1-C-(indol-3-yl)glycerol 3-phosphate + L-serine = D-glyceraldehyde 3-phosphate + L-tryptophan + H2O. The protein operates within amino-acid biosynthesis; L-tryptophan biosynthesis; L-tryptophan from chorismate: step 5/5. Functionally, the alpha subunit is responsible for the aldol cleavage of indoleglycerol phosphate to indole and glyceraldehyde 3-phosphate. The sequence is that of Tryptophan synthase alpha chain from Streptococcus sanguinis (strain SK36).